Consider the following 470-residue polypeptide: Zinc finger CCCH domain-containing protein 7 (470 aa).

Residues Ala122–His144 form a disordered region. Polar residues predominate over residues Gln131–Arg142. C3H1-type zinc fingers lie at residues Ala240 to Ser269, Val273 to Ile294, Pro295 to Val321, Asn322 to Asn349, and Cys350 to Asn372. A compositionally biased stretch (basic residues) spans Pro370–Arg381. Residues Pro370 to Asn389 are disordered.

In terms of biological role, possesses RNA-binding and ribonuclease activities in vitro. This chain is Zinc finger CCCH domain-containing protein 7, found in Arabidopsis thaliana (Mouse-ear cress).